Consider the following 212-residue polypeptide: ATP-dependent dethiobiotin synthetase BioD (212 aa).

An ATP-binding site is contributed by 12–17 (DCGKTF). Mg(2+) is bound at residue Thr-16. Residue Lys-33 is part of the active site. Ser-37 is a binding site for substrate. Residues Asp-50, 110–113 (EGAG), and 170–171 (NC) contribute to the ATP site. The Mg(2+) site is built by Asp-50 and Glu-110.

The protein belongs to the dethiobiotin synthetase family. As to quaternary structure, homodimer. Mg(2+) is required as a cofactor.

The protein localises to the cytoplasm. The catalysed reaction is (7R,8S)-7,8-diammoniononanoate + CO2 + ATP = (4R,5S)-dethiobiotin + ADP + phosphate + 3 H(+). It participates in cofactor biosynthesis; biotin biosynthesis; biotin from 7,8-diaminononanoate: step 1/2. In terms of biological role, catalyzes a mechanistically unusual reaction, the ATP-dependent insertion of CO2 between the N7 and N8 nitrogen atoms of 7,8-diaminopelargonic acid (DAPA, also called 7,8-diammoniononanoate) to form a ureido ring. The chain is ATP-dependent dethiobiotin synthetase BioD from Legionella pneumophila subsp. pneumophila (strain Philadelphia 1 / ATCC 33152 / DSM 7513).